We begin with the raw amino-acid sequence, 435 residues long: T-cell defective protein 2 (435 aa).

The tract at residues 65 to 146 (NASTSFQSQP…KTPDSLRKSI (82 aa)) is disordered. Positions 322-352 (TKISAKKEKEQKKSAAKEAALKEAKEKEMRI) form a coiled coil. The tract at residues 393-419 (FFKANPPPAPRAPQAPELASGPRRIPT) is disordered.

As to expression, strongly expressed in the cytoplasm of the pharynx muscle cells and several head neurons, probably the IL1s or IL2s, throughout development. Also expressed in some other unidentified neurons in the tail region. Weakly expressed in the nuclei of the T-cells and the T-cell daughters. Not expressed in gonads and in P12 cell.

The protein localises to the nucleus. It localises to the cytoplasm. Its function is as follows. May act synergistically with the Wnt pathways to control T-cell fate specification, gonad development, and P12 cell fate specification. Required for the distribution of pop-1 and tlp-1 proteins. This is T-cell defective protein 2 (tcl-2) from Caenorhabditis elegans.